We begin with the raw amino-acid sequence, 643 residues long: Beta-1,3-galactosyltransferase GALT1 (643 aa).

Residues 1–6 (MKRFYG) lie on the Cytoplasmic side of the membrane. A helical; Signal-anchor for type II membrane protein membrane pass occupies residues 7 to 23 (GLLVVSMCMFLTVYRYV). The Lumenal portion of the chain corresponds to 24 to 643 (DLNTPVEKPY…TKRSLCCREW (620 aa)). Residues Asn-45, Asn-87, Asn-144, Asn-162, Asn-277, Asn-287, and Asn-508 are each glycosylated (N-linked (GlcNAc...) asparagine). The 194-residue stretch at 171 to 364 (LKLQIPCGLT…DFRLISILAS (194 aa)) folds into the Galectin domain.

The protein belongs to the glycosyltransferase 31 family. Interacts with GMII. It depends on Mn(2+) as a cofactor. In terms of tissue distribution, expressed in stems and siliques.

The protein resides in the golgi apparatus membrane. It participates in protein modification; protein glycosylation. Functionally, beta-1,3-galactosyltransferase that transfers galactose from UDP-galactose to substrates with a terminal beta-N-acetylglucosamine (beta-GlcNAc) residue. Involved in the biosynthesis of N-glycans containing Lewis a structures (with the combination of FUT13). This is Beta-1,3-galactosyltransferase GALT1 from Arabidopsis thaliana (Mouse-ear cress).